Consider the following 692-residue polypeptide: DNA topoisomerase 4 subunit B (692 aa).

ATP is bound by residues Tyr-53, Asn-93, Asp-120, 162–168 (GLHGVGI), and Lys-393. The region spanning 473 to 587 (AELFIVEGDS…AGHLYLAVPP (115 aa)) is the Toprim domain. Mg(2+)-binding residues include Glu-479, Asp-552, and Asp-554.

The protein belongs to the type II topoisomerase family. ParE type 1 subfamily. As to quaternary structure, heterotetramer composed of ParC and ParE. The cofactor is Mg(2+). Mn(2+) serves as cofactor. Requires Ca(2+) as cofactor.

It catalyses the reaction ATP-dependent breakage, passage and rejoining of double-stranded DNA.. Topoisomerase IV is essential for chromosome segregation. It relaxes supercoiled DNA. Performs the decatenation events required during the replication of a circular DNA molecule. The chain is DNA topoisomerase 4 subunit B from Bartonella bacilliformis (strain ATCC 35685 / KC583 / Herrer 020/F12,63).